We begin with the raw amino-acid sequence, 919 residues long: TRPM8 channel-associated factor 2 (919 aa).

Residues 543–842 (DVWMSTGLYL…TYLQLQEVFG (300 aa)) enclose the Peptidase M60 domain.

It belongs to the TCAF family. Interacts with TRPM8 (via N-terminus and C-terminus domains); the interaction inhibits TRPM8 channel activity. Interacts with TRPV6.

The protein resides in the cell membrane. In terms of biological role, negatively regulates the plasma membrane cation channel TRPM8 activity. Involved in the recruitment of TRPM8 to the cell surface. Promotes prostate cancer cell migration stimulation in a TRPM8-dependent manner. The sequence is that of TRPM8 channel-associated factor 2 from Mus musculus (Mouse).